Here is a 319-residue protein sequence, read N- to C-terminus: Acetyl-coenzyme A carboxylase carboxyl transferase subunit alpha (319 aa).

In terms of domain architecture, CoA carboxyltransferase C-terminal spans 31–292 (EIDSAIRSLR…KTYLSRQLSE (262 aa)).

Belongs to the AccA family. In terms of assembly, acetyl-CoA carboxylase is a heterohexamer composed of biotin carboxyl carrier protein (AccB), biotin carboxylase (AccC) and two subunits each of ACCase subunit alpha (AccA) and ACCase subunit beta (AccD).

The protein localises to the cytoplasm. It carries out the reaction N(6)-carboxybiotinyl-L-lysyl-[protein] + acetyl-CoA = N(6)-biotinyl-L-lysyl-[protein] + malonyl-CoA. Its pathway is lipid metabolism; malonyl-CoA biosynthesis; malonyl-CoA from acetyl-CoA: step 1/1. Its function is as follows. Component of the acetyl coenzyme A carboxylase (ACC) complex. First, biotin carboxylase catalyzes the carboxylation of biotin on its carrier protein (BCCP) and then the CO(2) group is transferred by the carboxyltransferase to acetyl-CoA to form malonyl-CoA. This chain is Acetyl-coenzyme A carboxylase carboxyl transferase subunit alpha, found in Rhodopirellula baltica (strain DSM 10527 / NCIMB 13988 / SH1).